The chain runs to 99 residues: Integration host factor subunit beta (99 aa).

The protein belongs to the bacterial histone-like protein family. Heterodimer of an alpha and a beta chain.

Its function is as follows. This protein is one of the two subunits of integration host factor, a specific DNA-binding protein that functions in genetic recombination as well as in transcriptional and translational control. The sequence is that of Integration host factor subunit beta from Laribacter hongkongensis (strain HLHK9).